Consider the following 145-residue polypeptide: D-aminoacyl-tRNA deacylase (145 aa).

The Gly-cisPro motif, important for rejection of L-amino acids motif lies at G137 to P138.

The protein belongs to the DTD family. As to quaternary structure, homodimer.

It localises to the cytoplasm. It carries out the reaction glycyl-tRNA(Ala) + H2O = tRNA(Ala) + glycine + H(+). The enzyme catalyses a D-aminoacyl-tRNA + H2O = a tRNA + a D-alpha-amino acid + H(+). In terms of biological role, an aminoacyl-tRNA editing enzyme that deacylates mischarged D-aminoacyl-tRNAs. Also deacylates mischarged glycyl-tRNA(Ala), protecting cells against glycine mischarging by AlaRS. Acts via tRNA-based rather than protein-based catalysis; rejects L-amino acids rather than detecting D-amino acids in the active site. By recycling D-aminoacyl-tRNA to D-amino acids and free tRNA molecules, this enzyme counteracts the toxicity associated with the formation of D-aminoacyl-tRNA entities in vivo and helps enforce protein L-homochirality. The chain is D-aminoacyl-tRNA deacylase from Shewanella sediminis (strain HAW-EB3).